Here is a 332-residue protein sequence, read N- to C-terminus: T-cell surface glycoprotein CD1c3 (332 aa).

A signal peptide spans 1–17 (MLFLQFLFLDVVLGGSI). Residues 18-300 (TKNVVQENIS…IILYWGHGLS (283 aa)) lie on the Extracellular side of the membrane. N-linked (GlcNAc...) asparagine glycosylation is found at asparagine 25, asparagine 38, asparagine 75, and asparagine 146. 2 disulfides stabilise this stretch: cysteine 120–cysteine 184 and cysteine 224–cysteine 279. The region spanning 205-292 (PEVWLSSSPN…HSSLRDQDII (88 aa)) is the Ig-like domain. The chain crosses the membrane as a helical span at residues 301-321 (VILITFAVIVPLVLLIILVLL). Residues 322–332 (CKKCCTYQGIP) lie on the Cytoplasmic side of the membrane.

In terms of assembly, heterodimer with B2M (beta-2-microglobulin).

The protein localises to the cell membrane. It is found in the endosome membrane. Its function is as follows. Antigen-presenting protein that binds self and non-self lipid and glycolipid antigens and presents them to T-cell receptors on natural killer T-cells. The polypeptide is T-cell surface glycoprotein CD1c3 (CD1C3) (Cavia porcellus (Guinea pig)).